A 471-amino-acid polypeptide reads, in one-letter code: ATP synthase subunit beta (471 aa).

152–159 (GGAGVGKT) is a binding site for ATP.

It belongs to the ATPase alpha/beta chains family. F-type ATPases have 2 components, CF(1) - the catalytic core - and CF(0) - the membrane proton channel. CF(1) has five subunits: alpha(3), beta(3), gamma(1), delta(1), epsilon(1). CF(0) has three main subunits: a(1), b(2) and c(9-12). The alpha and beta chains form an alternating ring which encloses part of the gamma chain. CF(1) is attached to CF(0) by a central stalk formed by the gamma and epsilon chains, while a peripheral stalk is formed by the delta and b chains.

Its subcellular location is the cell membrane. It catalyses the reaction ATP + H2O + 4 H(+)(in) = ADP + phosphate + 5 H(+)(out). In terms of biological role, produces ATP from ADP in the presence of a proton gradient across the membrane. The catalytic sites are hosted primarily by the beta subunits. This Herpetosiphon aurantiacus (strain ATCC 23779 / DSM 785 / 114-95) protein is ATP synthase subunit beta.